Here is an 82-residue protein sequence, read N- to C-terminus: Large ribosomal subunit protein uL23 (82 aa).

Belongs to the universal ribosomal protein uL23 family. In terms of assembly, part of the 50S ribosomal subunit. Contacts protein L29.

In terms of biological role, binds to 23S rRNA. One of the proteins that surrounds the polypeptide exit tunnel on the outside of the ribosome. This chain is Large ribosomal subunit protein uL23, found in Natronomonas pharaonis (strain ATCC 35678 / DSM 2160 / CIP 103997 / JCM 8858 / NBRC 14720 / NCIMB 2260 / Gabara) (Halobacterium pharaonis).